The following is a 144-amino-acid chain: Vasopressin-neurophysin 2-copeptin (144 aa).

The cysteines at positions 1 and 6 are disulfide-linked. Glycine amide is present on Gly9. Intrachain disulfides connect Cys22-Cys66, Cys25-Cys39, Cys33-Cys56, Cys40-Cys46, Cys73-Cys85, Cys79-Cys97, and Cys86-Cys91. A glycan (N-linked (GlcNAc...) asparagine) is linked at Asn112.

It belongs to the vasopressin/oxytocin family. As to quaternary structure, interacts with vasopressin receptors V1bR/AVPR1B (Ki=85 pM), V1aR/AVPR1A (Ki=0.6 nM) and V2R/AVPR2 (Ki=4.9 nM). Interacts with oxytocin receptor (OXTR) (Ki=110 nM).

The protein localises to the secreted. Functionally, neurophysin 2 specifically binds vasopressin. Its function is as follows. Vasopressin has a direct antidiuretic action on the kidney, it also causes vasoconstriction of the peripheral vessels. Acts by binding to vasopressin receptors (V1bR/AVPR1B, V1aR/AVPR1A, and V2R/AVPR2). This Cavia porcellus (Guinea pig) protein is Vasopressin-neurophysin 2-copeptin (AVP).